The sequence spans 305 residues: Ornithine carbamoyltransferase, catabolic (305 aa).

Residues 50-53 (STRT), Q77, R101, and 128-131 (HPLQ) contribute to the carbamoyl phosphate site. Residues N159, D223, and 227-228 (SM) each bind L-ornithine. Carbamoyl phosphate is bound by residues 263 to 264 (CL) and R291.

The protein belongs to the aspartate/ornithine carbamoyltransferase superfamily. OTCase family.

The protein localises to the cytoplasm. It carries out the reaction carbamoyl phosphate + L-ornithine = L-citrulline + phosphate + H(+). It functions in the pathway amino-acid degradation; L-arginine degradation via ADI pathway; carbamoyl phosphate from L-arginine: step 2/2. Reversibly catalyzes the transfer of the carbamoyl group from carbamoyl phosphate (CP) to the N(epsilon) atom of ornithine (ORN) to produce L-citrulline. The sequence is that of Ornithine carbamoyltransferase, catabolic from Thermoplasma volcanium (strain ATCC 51530 / DSM 4299 / JCM 9571 / NBRC 15438 / GSS1).